Consider the following 210-residue polypeptide: 3,4-dihydroxy-2-butanone 4-phosphate synthase (210 aa).

D-ribulose 5-phosphate is bound by residues 33–34 (RE), Asp-38, 146–150 (RRGHT), and Glu-170. Residue Glu-34 participates in Mg(2+) binding. His-149 serves as a coordination point for Mg(2+).

Belongs to the DHBP synthase family. In terms of assembly, homodimer. Requires Mg(2+) as cofactor. Mn(2+) serves as cofactor.

It catalyses the reaction D-ribulose 5-phosphate = (2S)-2-hydroxy-3-oxobutyl phosphate + formate + H(+). It participates in cofactor biosynthesis; riboflavin biosynthesis; 2-hydroxy-3-oxobutyl phosphate from D-ribulose 5-phosphate: step 1/1. Functionally, catalyzes the conversion of D-ribulose 5-phosphate to formate and 3,4-dihydroxy-2-butanone 4-phosphate. This chain is 3,4-dihydroxy-2-butanone 4-phosphate synthase, found in Chromobacterium violaceum (strain ATCC 12472 / DSM 30191 / JCM 1249 / CCUG 213 / NBRC 12614 / NCIMB 9131 / NCTC 9757 / MK).